A 227-amino-acid polypeptide reads, in one-letter code: 2,3-bisphosphoglycerate-dependent phosphoglycerate mutase (227 aa).

Substrate is bound by residues 7–14 (RHGFSEWN), 20–21 (TG), Arg-59, 86–89 (ERHY), Lys-97, 113–114 (RR), and 182–183 (GN). His-8 acts as the Tele-phosphohistidine intermediate in catalysis. Residue Glu-86 is the Proton donor/acceptor of the active site.

The protein belongs to the phosphoglycerate mutase family. BPG-dependent PGAM subfamily. In terms of assembly, homodimer.

The catalysed reaction is (2R)-2-phosphoglycerate = (2R)-3-phosphoglycerate. It functions in the pathway carbohydrate degradation; glycolysis; pyruvate from D-glyceraldehyde 3-phosphate: step 3/5. Catalyzes the interconversion of 2-phosphoglycerate and 3-phosphoglycerate. The polypeptide is 2,3-bisphosphoglycerate-dependent phosphoglycerate mutase (Histophilus somni (strain 129Pt) (Haemophilus somnus)).